A 431-amino-acid polypeptide reads, in one-letter code: Glutamate-1-semialdehyde 2,1-aminomutase (431 aa).

Lys269 is modified (N6-(pyridoxal phosphate)lysine).

It belongs to the class-III pyridoxal-phosphate-dependent aminotransferase family. HemL subfamily. In terms of assembly, homodimer. The cofactor is pyridoxal 5'-phosphate.

The protein localises to the cytoplasm. It catalyses the reaction (S)-4-amino-5-oxopentanoate = 5-aminolevulinate. Its pathway is porphyrin-containing compound metabolism; protoporphyrin-IX biosynthesis; 5-aminolevulinate from L-glutamyl-tRNA(Glu): step 2/2. It functions in the pathway porphyrin-containing compound metabolism; chlorophyll biosynthesis. The sequence is that of Glutamate-1-semialdehyde 2,1-aminomutase from Chlorobium phaeobacteroides (strain DSM 266 / SMG 266 / 2430).